The sequence spans 197 residues: Ribonuclease HII (197 aa).

Residues 11–197 enclose the RNase H type-2 domain; the sequence is GRIAGVDEVG…FGPVKRVLGL (187 aa). The a divalent metal cation site is built by aspartate 17, glutamate 18, and aspartate 109.

The protein belongs to the RNase HII family. Requires Mn(2+) as cofactor. The cofactor is Mg(2+).

The protein localises to the cytoplasm. It carries out the reaction Endonucleolytic cleavage to 5'-phosphomonoester.. Its function is as follows. Endonuclease that specifically degrades the RNA of RNA-DNA hybrids. This is Ribonuclease HII from Edwardsiella ictaluri (strain 93-146).